We begin with the raw amino-acid sequence, 147 residues long: Hemoglobin subunit delta (147 aa).

Positions 3–147 (HLTADETALV…VANALAHKYH (145 aa)) constitute a Globin domain. The residue at position 51 (Ser51) is a Phosphoserine. Heme b-binding residues include His64 and His93.

This sequence belongs to the globin family. In terms of assembly, heterotetramer of two delta chains and two alpha chains. In terms of tissue distribution, red blood cells.

This chain is Hemoglobin subunit delta (HBD), found in Dugong dugon (Dugong).